The primary structure comprises 393 residues: S-adenosylmethionine synthase (393 aa).

Residue histidine 16 coordinates ATP. Aspartate 18 serves as a coordination point for Mg(2+). Glutamate 44 contributes to the K(+) binding site. L-methionine contacts are provided by glutamate 57 and glutamine 100. Residues 100–110 (QSNDIAQGVDH) are flexible loop. ATP is bound by residues 167–169 (DAK), 238–239 (RF), aspartate 247, 253–254 (RK), alanine 270, and lysine 274. L-methionine is bound at residue aspartate 247. An L-methionine-binding site is contributed by lysine 278.

Belongs to the AdoMet synthase family. As to quaternary structure, homotetramer; dimer of dimers. The cofactor is Mg(2+). Requires K(+) as cofactor.

The protein resides in the cytoplasm. The catalysed reaction is L-methionine + ATP + H2O = S-adenosyl-L-methionine + phosphate + diphosphate. The protein operates within amino-acid biosynthesis; S-adenosyl-L-methionine biosynthesis; S-adenosyl-L-methionine from L-methionine: step 1/1. In terms of biological role, catalyzes the formation of S-adenosylmethionine (AdoMet) from methionine and ATP. The overall synthetic reaction is composed of two sequential steps, AdoMet formation and the subsequent tripolyphosphate hydrolysis which occurs prior to release of AdoMet from the enzyme. This is S-adenosylmethionine synthase from Variovorax paradoxus (strain S110).